The primary structure comprises 302 residues: 4-hydroxy-tetrahydrodipicolinate synthase (302 aa).

A pyruvate-binding site is contributed by Thr57. The active-site Proton donor/acceptor is the Tyr145. Lys173 (schiff-base intermediate with substrate) is an active-site residue. A pyruvate-binding site is contributed by Ile213.

The protein belongs to the DapA family. As to quaternary structure, homotetramer; dimer of dimers.

The protein resides in the cytoplasm. The enzyme catalyses L-aspartate 4-semialdehyde + pyruvate = (2S,4S)-4-hydroxy-2,3,4,5-tetrahydrodipicolinate + H2O + H(+). The protein operates within amino-acid biosynthesis; L-lysine biosynthesis via DAP pathway; (S)-tetrahydrodipicolinate from L-aspartate: step 3/4. Catalyzes the condensation of (S)-aspartate-beta-semialdehyde [(S)-ASA] and pyruvate to 4-hydroxy-tetrahydrodipicolinate (HTPA). This chain is 4-hydroxy-tetrahydrodipicolinate synthase, found in Corynebacterium aurimucosum (strain ATCC 700975 / DSM 44827 / CIP 107346 / CN-1) (Corynebacterium nigricans).